A 161-amino-acid polypeptide reads, in one-letter code: Small ribosomal subunit protein uS9 (161 aa).

The protein belongs to the universal ribosomal protein uS9 family.

This is Small ribosomal subunit protein uS9 from Methylobacterium radiotolerans (strain ATCC 27329 / DSM 1819 / JCM 2831 / NBRC 15690 / NCIMB 10815 / 0-1).